Here is a 372-residue protein sequence, read N- to C-terminus: Putative glutamate--cysteine ligase 2 (372 aa).

It belongs to the glutamate--cysteine ligase type 2 family. YbdK subfamily.

It carries out the reaction L-cysteine + L-glutamate + ATP = gamma-L-glutamyl-L-cysteine + ADP + phosphate + H(+). In terms of biological role, ATP-dependent carboxylate-amine ligase which exhibits weak glutamate--cysteine ligase activity. This chain is Putative glutamate--cysteine ligase 2, found in Cupriavidus metallidurans (strain ATCC 43123 / DSM 2839 / NBRC 102507 / CH34) (Ralstonia metallidurans).